We begin with the raw amino-acid sequence, 208 residues long: Ras-related protein Rab6 (208 aa).

GTP is bound at residue 19–27 (GEQSVGKTS). Positions 41-49 (YQATIGIDF) match the Effector region motif. GTP contacts are provided by residues 67 to 71 (DTAGQ), 125 to 128 (NKTD), and 155 to 157 (SAK). A disordered region spans residues 176–208 (MDSTENKPSEDMQEVVLKDSPNETKDPEGGCAC). Positions 179 to 208 (TENKPSEDMQEVVLKDSPNETKDPEGGCAC) are enriched in basic and acidic residues.

This sequence belongs to the small GTPase superfamily. Rab family. Interacts with Rich and Act5C. Interacts with BicD (via C-terminal domain). Interacts (in GTP-bound) with GCC1/CG10703 and cbs. Interacts with Gorab (via C-terminus); binds to a Gorab homodimer, this interaction seems to be required for trans-Golgi localization of Gorab. Expressed in larval eye, wing and leg imaginal disks and in salivary gland. Expressed in the larval optic lobe, showing an enrichment in the neuropil. In the adult brain, expressed in photoreceptors and mushroom body.

It is found in the golgi apparatus membrane. The protein localises to the synapse. Its subcellular location is the perikaryon. Its function is as follows. Protein transport. Regulator of membrane traffic from the Golgi apparatus towards the endoplasmic reticulum (ER). Mediates membrane trafficking during egg chamber growth and organization, possibly upstream of exocyst component Sec5. Also during oogenesis, plays a role, together with BicD but independently of Sec5, in the polarization of the oocyte microtubule cytoskeleton, in the localization of oskar mRNA and in the anterodorsal secretion of grk. Required for anterograde opsin transport through the ER-Golgi complex. Plays a role, together with Rich, in regulating CadN transport in photoreceptor cells which is required for the formation of normal synaptic connections between axons from the inner photoreceptor cells in the eye and postsynaptic cells in the brain medulla layer M6. Necessary for proper development of bristle shafts of macrochaete and microchaete on the head, thorax and scutellum. Modulates Notch signaling. As a key regulator of vesicular traffic, plays a critical role in the regulation of actin organization and is required for normal rates of phagocytic uptake during phagocytosis involved in defense against viral and fungal infection. The protein is Ras-related protein Rab6 of Drosophila melanogaster (Fruit fly).